The chain runs to 127 residues: MIELDYLTIAFGGAIGAVLRYLVSRTINSLLPFSYIPLGTIIVNSVGSFFLSFLMFAAIEKVPLSKEAILFFGTGLLGAFTTFSTFTYETLSLIEESPARGVAYALVNLLFAFTCAYFGMILGRGKV.

Helical transmembrane passes span 4–24 (LDYL…YLVS), 39–59 (GTII…FAAI), 68–88 (AILF…TFTY), and 102–122 (VAYA…GMIL). 2 residues coordinate Na(+): G78 and T81.

It belongs to the fluoride channel Fluc/FEX (TC 1.A.43) family.

The protein resides in the cell inner membrane. The enzyme catalyses fluoride(in) = fluoride(out). With respect to regulation, na(+) is not transported, but it plays an essential structural role and its presence is essential for fluoride channel function. In terms of biological role, fluoride-specific ion channel. Important for reducing fluoride concentration in the cell, thus reducing its toxicity. The polypeptide is Fluoride-specific ion channel FluC (Thermotoga petrophila (strain ATCC BAA-488 / DSM 13995 / JCM 10881 / RKU-1)).